We begin with the raw amino-acid sequence, 230 residues long: MSQSYNNIDGLLLLDKPFGITSFDAVYKIKKVLNVEKTGHCGTLDPASTGLLLVLMGKATKLQAKFMKKDKVYLSSFLLGMVTDSGDLDGKVISENSVLNINIEKIKKMVEMFEGEIFQIPPMYSALKYNGKKLCELARQGIEVERKPRKVTIKKFEVLSYDGDIVKVRIECSSGTYIRTLAQDLGNVLKCGATVKTLRREKIDIFDIKDALRFKDTDSADKIIKKLIPL.

The active-site Nucleophile is the Asp-45.

Belongs to the pseudouridine synthase TruB family. Type 1 subfamily.

The enzyme catalyses uridine(55) in tRNA = pseudouridine(55) in tRNA. In terms of biological role, responsible for synthesis of pseudouridine from uracil-55 in the psi GC loop of transfer RNAs. The protein is tRNA pseudouridine synthase B of Endomicrobium trichonymphae.